The sequence spans 105 residues: Serine protease inhibitor Kazal-type 6 (105 aa).

Residues 1–23 form the signal peptide; the sequence is MKVAGVFLLLSLALLCFFSGAFS. At Gln24 the chain carries Pyrrolidone carboxylic acid. A Kazal-like domain is found at 49 to 105; it reads RLFQINCGEFRDPKVFCTRESDPLCGSDGQTYGNKCAFCKALEKSSGKINLKHRGKC. 3 cysteine pairs are disulfide-bonded: Cys55-Cys87, Cys65-Cys84, and Cys73-Cys105.

Expressed in the upper epidermis and in skin appendages.

The protein resides in the secreted. Serine protease inhibitor selective for kallikreins. Efficiently inhibits KLK5 and human KLK2, KLK4, KLK5, KLK6, KLK7, KLK12, KLK13 and KLK14. Doesn't inhibit human KLK1 and KLK8. In Mus musculus (Mouse), this protein is Serine protease inhibitor Kazal-type 6 (Spink6).